A 294-amino-acid chain; its full sequence is Hydroxyethylthiazole kinase (294 aa).

Methionine 57 provides a ligand contact to substrate. ATP is bound by residues arginine 132 and serine 196. Glycine 223 is a binding site for substrate.

Belongs to the Thz kinase family. It depends on Mg(2+) as a cofactor.

The enzyme catalyses 5-(2-hydroxyethyl)-4-methylthiazole + ATP = 4-methyl-5-(2-phosphooxyethyl)-thiazole + ADP + H(+). It functions in the pathway cofactor biosynthesis; thiamine diphosphate biosynthesis; 4-methyl-5-(2-phosphoethyl)-thiazole from 5-(2-hydroxyethyl)-4-methylthiazole: step 1/1. Its function is as follows. Catalyzes the phosphorylation of the hydroxyl group of 4-methyl-5-beta-hydroxyethylthiazole (THZ). The chain is Hydroxyethylthiazole kinase from Bifidobacterium adolescentis (strain ATCC 15703 / DSM 20083 / NCTC 11814 / E194a).